Reading from the N-terminus, the 730-residue chain is ABC transporter G family member 20 (730 aa).

Residues isoleucine 15 to phenylalanine 244 form the ABC transporter domain. Glycine 47 to threonine 54 is a binding site for ATP. The interval valine 281 to glutamate 303 is disordered. Residues asparagine 282 to asparagine 298 are compositionally biased toward low complexity. An ABC transmembrane type-2 domain is found at serine 489 to lysine 717. 5 consecutive transmembrane segments (helical) span residues phenylalanine 520–isoleucine 540, phenylalanine 572–tyrosine 592, isoleucine 602–valine 622, isoleucine 634–leucine 654, and valine 692–leucine 712.

It belongs to the ABC transporter superfamily.

Its subcellular location is the membrane. The protein is ABC transporter G family member 20 (abcG20) of Dictyostelium discoideum (Social amoeba).